We begin with the raw amino-acid sequence, 549 residues long: 4-hydroxybutyrate--CoA ligase 2 (549 aa).

ATP is bound by residues 195–203 (TSGTTGLPK), 336–341 (ETYGPH), aspartate 425, and arginine 440. CoA is bound by residues 448 to 450 (GGE), lysine 506, and 514 to 516 (CPK). Residue lysine 530 coordinates ATP.

Belongs to the ATP-dependent AMP-binding enzyme family. Requires Mg(2+) as cofactor. Mn(2+) is required as a cofactor.

It carries out the reaction 4-hydroxybutanoate + ATP + CoA = 4-hydroxybutanoyl-CoA + AMP + diphosphate. It catalyses the reaction acetate + ATP + CoA = acetyl-CoA + AMP + diphosphate. The catalysed reaction is propanoate + ATP + CoA = propanoyl-CoA + AMP + diphosphate. The enzyme catalyses a medium-chain fatty acid + ATP + CoA = a medium-chain fatty acyl-CoA + AMP + diphosphate. Functionally, catalyzes the ligation of coenzyme A (CoA) to 4-hydroxybutyrate (4HB). It can also use butyrate, valerate, propionate, acetate and 3-hydroxybutyrate (3HB) as substrates. In Metallosphaera sedula (strain ATCC 51363 / DSM 5348 / JCM 9185 / NBRC 15509 / TH2), this protein is 4-hydroxybutyrate--CoA ligase 2.